The following is a 210-amino-acid chain: Dephospho-CoA kinase (210 aa).

One can recognise a DPCK domain in the interval 4-202 (WVGLTGGIGS…AFYSGIFASK (199 aa)). Residue 12–17 (GSGKSA) participates in ATP binding.

This sequence belongs to the CoaE family.

It localises to the cytoplasm. The catalysed reaction is 3'-dephospho-CoA + ATP = ADP + CoA + H(+). Its pathway is cofactor biosynthesis; coenzyme A biosynthesis; CoA from (R)-pantothenate: step 5/5. Functionally, catalyzes the phosphorylation of the 3'-hydroxyl group of dephosphocoenzyme A to form coenzyme A. The chain is Dephospho-CoA kinase from Neisseria meningitidis serogroup B (strain ATCC BAA-335 / MC58).